Consider the following 517-residue polypeptide: Probable protein phosphatase 2C 20 (517 aa).

Positions 1 to 59 are disordered; it reads MWVMQGERRRARAPWGPPDTGGALLERWISRERRSDSRDASGSAKQRSAMGNSLPVESK. Basic and acidic residues predominate over residues 28-39; that stretch reads WISRERRSDSRD. The region spanning 70–373 is the PPM-type phosphatase domain; that stretch reads KYVVSSMQGW…DNTTVILVLF (304 aa). Positions 105, 106, 323, and 364 each coordinate Mn(2+). The tract at residues 380-517 is disordered; the sequence is AVPPVDTDTD…PPHDDTYHRW (138 aa). Polar residues predominate over residues 402–414; sequence GSNNATASDNNDP. Residues 438–455 are compositionally biased toward low complexity; the sequence is DATATAVGSSSTTAVAAD. Positions 499–517 are enriched in basic and acidic residues; sequence LPRSNPDKSPPHDDTYHRW.

The protein belongs to the PP2C family. It depends on Mg(2+) as a cofactor. Requires Mn(2+) as cofactor.

The enzyme catalyses O-phospho-L-seryl-[protein] + H2O = L-seryl-[protein] + phosphate. The catalysed reaction is O-phospho-L-threonyl-[protein] + H2O = L-threonyl-[protein] + phosphate. This is Probable protein phosphatase 2C 20 from Oryza sativa subsp. japonica (Rice).